The primary structure comprises 448 residues: Methylenetetrahydrofolate--tRNA-(uracil-5-)-methyltransferase TrmFO (448 aa).

13-18 is an FAD binding site; that stretch reads GAGLAG.

The protein belongs to the MnmG family. TrmFO subfamily. The cofactor is FAD.

The protein localises to the cytoplasm. It carries out the reaction uridine(54) in tRNA + (6R)-5,10-methylene-5,6,7,8-tetrahydrofolate + NADH + H(+) = 5-methyluridine(54) in tRNA + (6S)-5,6,7,8-tetrahydrofolate + NAD(+). It catalyses the reaction uridine(54) in tRNA + (6R)-5,10-methylene-5,6,7,8-tetrahydrofolate + NADPH + H(+) = 5-methyluridine(54) in tRNA + (6S)-5,6,7,8-tetrahydrofolate + NADP(+). Catalyzes the folate-dependent formation of 5-methyl-uridine at position 54 (M-5-U54) in all tRNAs. The polypeptide is Methylenetetrahydrofolate--tRNA-(uracil-5-)-methyltransferase TrmFO (Streptococcus pyogenes serotype M12 (strain MGAS2096)).